A 331-amino-acid polypeptide reads, in one-letter code: Beta-ketoacyl-[acyl-carrier-protein] synthase III (331 aa).

Catalysis depends on residues C115 and H255. Positions 256–260 (QANFR) are ACP-binding. Residue N285 is part of the active site.

This sequence belongs to the thiolase-like superfamily. FabH family. In terms of assembly, homodimer.

The protein localises to the cytoplasm. The enzyme catalyses malonyl-[ACP] + acetyl-CoA + H(+) = 3-oxobutanoyl-[ACP] + CO2 + CoA. Its pathway is lipid metabolism; fatty acid biosynthesis. Functionally, catalyzes the condensation reaction of fatty acid synthesis by the addition to an acyl acceptor of two carbons from malonyl-ACP. Catalyzes the first condensation reaction which initiates fatty acid synthesis and may therefore play a role in governing the total rate of fatty acid production. Possesses both acetoacetyl-ACP synthase and acetyl transacylase activities. Its substrate specificity determines the biosynthesis of branched-chain and/or straight-chain of fatty acids. The sequence is that of Beta-ketoacyl-[acyl-carrier-protein] synthase III from Helicobacter pylori (strain Shi470).